The primary structure comprises 218 residues: Hypoxanthine-guanine phosphoribosyltransferase (218 aa).

GMP is bound by residues K69, 134-142, K166, 186-188, and D194; these read EDIIDTGKT and KFV. Residue D138 is the Proton acceptor of the active site. D194 contributes to the Mg(2+) binding site.

Belongs to the purine/pyrimidine phosphoribosyltransferase family. Homotetramer. It depends on Mg(2+) as a cofactor.

The protein resides in the cytoplasm. The catalysed reaction is IMP + diphosphate = hypoxanthine + 5-phospho-alpha-D-ribose 1-diphosphate. The enzyme catalyses GMP + diphosphate = guanine + 5-phospho-alpha-D-ribose 1-diphosphate. Its pathway is purine metabolism; IMP biosynthesis via salvage pathway; IMP from hypoxanthine: step 1/1. Converts guanine to guanosine monophosphate, and hypoxanthine to inosine monophosphate. Transfers the 5-phosphoribosyl group from 5-phosphoribosylpyrophosphate onto the purine. Plays a central role in the generation of purine nucleotides through the purine salvage pathway. The protein is Hypoxanthine-guanine phosphoribosyltransferase (HPRT1) of Gallus gallus (Chicken).